The sequence spans 430 residues: Enolase (430 aa).

Q167 is a (2R)-2-phosphoglycerate binding site. The active-site Proton donor is E209. Mg(2+) contacts are provided by D246, E287, and D314. Positions 339, 368, 369, and 390 each coordinate (2R)-2-phosphoglycerate. Catalysis depends on K339, which acts as the Proton acceptor.

It belongs to the enolase family. Mg(2+) serves as cofactor.

Its subcellular location is the cytoplasm. It is found in the secreted. It localises to the cell surface. It carries out the reaction (2R)-2-phosphoglycerate = phosphoenolpyruvate + H2O. The protein operates within carbohydrate degradation; glycolysis; pyruvate from D-glyceraldehyde 3-phosphate: step 4/5. Its function is as follows. Catalyzes the reversible conversion of 2-phosphoglycerate (2-PG) into phosphoenolpyruvate (PEP). It is essential for the degradation of carbohydrates via glycolysis. The sequence is that of Enolase from Prochlorococcus marinus subsp. pastoris (strain CCMP1986 / NIES-2087 / MED4).